Consider the following 480-residue polypeptide: Cysteine--tRNA ligase (480 aa).

Cys27 provides a ligand contact to Zn(2+). Positions 29 to 39 (PTVYNYAHIGN) match the 'HIGH' region motif. Residues Cys221, His246, and Glu250 each contribute to the Zn(2+) site. Positions 278–282 (KMSKS) match the 'KMSKS' region motif. ATP is bound at residue Lys281.

The protein belongs to the class-I aminoacyl-tRNA synthetase family. As to quaternary structure, monomer. Requires Zn(2+) as cofactor.

The protein resides in the cytoplasm. It carries out the reaction tRNA(Cys) + L-cysteine + ATP = L-cysteinyl-tRNA(Cys) + AMP + diphosphate. This is Cysteine--tRNA ligase from Borrelia garinii subsp. bavariensis (strain ATCC BAA-2496 / DSM 23469 / PBi) (Borreliella bavariensis).